The following is a 216-amino-acid chain: Ion-translocating oxidoreductase complex subunit G (216 aa).

A helical transmembrane segment spans residues 14–34; sequence ALVLGSFGFLAASFVSIIYVI. Position 181 is an FMN phosphoryl threonine (Thr-181).

The protein belongs to the RnfG family. As to quaternary structure, the complex is composed of six subunits: RnfA, RnfB, RnfC, RnfD, RnfE and RnfG. FMN serves as cofactor.

The protein resides in the cell inner membrane. Its function is as follows. Part of a membrane-bound complex that couples electron transfer with translocation of ions across the membrane. This Buchnera aphidicola subsp. Baizongia pistaciae (strain Bp) protein is Ion-translocating oxidoreductase complex subunit G.